The following is a 451-amino-acid chain: Pre-mRNA-splicing factor PRP46 (451 aa).

7 WD repeats span residues 137–168 (GHLG…KVWD), 180–210 (GHVM…KCWD), 222–252 (GHLS…KLWD), 264–294 (GHKG…RLWD), 306–335 (HHKR…RSWG), 348–377 (EKTG…SFYD), and 397–427 (EGER…KIWK).

This sequence belongs to the WD repeat PRL1/PRL2 family. As to quaternary structure, belongs to the CWC complex (or CEF1-associated complex), a spliceosome subcomplex composed of the U2, U5 and U6 snRNAs and at least BUD13, BUD31, BRR2, CDC40, CEF1, CLF1, CUS1, CWC2, CWC15, CWC21, CWC22, CWC23, CWC24, CWC25, CWC27, ECM2, HSH155, IST3, ISY1, LEA1, MSL1, NTC20, PRP8, PRP9, PRP11, PRP19, PRP21, PRP22, PRP45, PRP46, SLU7, SMB1, SMD1, SMD2, SMD3, SMX2, SMX3, SNT309, SNU114, SPP2, SYF1, SYF2, RSE1 and YJU2. Interacts with CEF1, CLF1, NTC20, PRP45 and SYF1.

The protein localises to the cytoplasm. The protein resides in the nucleus. Involved in pre-mRNA splicing. May also be required for cell cycle progression at G2/M. This chain is Pre-mRNA-splicing factor PRP46 (PRP46), found in Saccharomyces cerevisiae (strain ATCC 204508 / S288c) (Baker's yeast).